We begin with the raw amino-acid sequence, 388 residues long: Gastricsin (388 aa).

The first 16 residues, 1 to 16, serve as a signal peptide directing secretion; it reads MKWLLVALVCLHLLEA. A propeptide spans 17 to 59 (activation peptide); it reads AVIKVPLRKFKSIRETLKEKGLLKEFLNTHKYDPALKYRFGDF. Residues 73–385 enclose the Peptidase A1 domain; the sequence is YFGEISIGTP…DMANNRVGFA (313 aa). D91 is a catalytic residue. Cystine bridges form between C104-C109 and C267-C271. D276 is a catalytic residue. A disulfide bond links C310 and C343.

Belongs to the peptidase A1 family.

It is found in the secreted. The enzyme catalyses More restricted specificity than pepsin A, but shows preferential cleavage at Tyr-|-Xaa bonds. High activity on hemoglobin.. Hydrolyzes a variety of proteins. The chain is Gastricsin (PGC) from Oryctolagus cuniculus (Rabbit).